The sequence spans 114 residues: Peroxisomal biogenesis factor 39 (114 aa).

2 disordered regions span residues 1–26 (MSWW…AEPA) and 53–114 (ITAT…PRVS). Ser-102 is modified (phosphoserine).

The protein localises to the peroxisome. Functionally, may be a peroxin involved in the PTS2-mediated protein import pathway. This is Peroxisomal biogenesis factor 39 (Pex39) from Mus musculus (Mouse).